A 321-amino-acid polypeptide reads, in one-letter code: Viral T-cell receptor beta chain-like T17T-22 (321 aa).

The first 28 residues, 1–28 (MISWLPSVAMGSRLLCCVALCLLGAGPA), serve as a signal peptide directing secretion. A v segment region spans residues 29–122 (DSGLTQTPRH…DSALYLCASS (94 aa)). Asn105 carries N-linked (GlcNAc...) asparagine; by host glycosylation. The d segment stretch occupies residues 123 to 128 (PNEDSE). The tract at residues 129–144 (YGETLYFGEGSRLTVV) is j segment. Residues 145 to 321 (EDLKKVSPPK…LMAKVKRKDS (177 aa)) form a c region region. N-linked (GlcNAc...) asparagine; by host glycosylation is found at Asn214 and Asn264.

In Feline leukemia virus, this protein is Viral T-cell receptor beta chain-like T17T-22 (V-TCR).